The primary structure comprises 576 residues: MRRHMVTYAWQLLKKELGLYQLAMDIIIMIRVCKMFRQGLRGFREYQIIETAHWKHPIFSFWDKKMQSRVTFDTMDFIAEEGHFPPKAIQIMQKKPSWRTEDEIQAVCNILQVLDSYRNYAEPLQLLLAKVMRFERFGRRRVIIKKGQKGNSFYFIYLGTVAITKDEDGSSAFLDPHPKLLHKGSCFGEMDVLHASVRRSTIVCMEETEFLVVDREDFFANKLDQEVQKDAQYRFEFFRKMELFASWSDEKLWQLVAMAKIERFSYGQLISKDFGESPFIMFISKGSCEVLRLLDLGASPSYRRWIWQHLELIDGRPLKTHLSEYSPMERFKEFQIKSYPLQDFSSLKLPHLKKAWGLQGTSFSRKIRTSGDTLPKMLGPKIQSRPAQSIKCAMINIKPGELPKEAAVGAYVKVHTVEQGEILGLHQAFLPEGECDTRPLILMSLGNELIRIRKEIFYELIDNDDEMIKKLLKLNIAFPSDEDMCQKFLQQNSWNIFRKDLLQLLVEPCQSQLFTPNRPKKREIYNPKSVVLDLCSINKTTKPRYPIFMAPQKYLPPLRIVQAIKAPRYKIRELLA.

116–239 (SYRNYAEPLQ…DAQYRFEFFR (124 aa)) serves as a coordination point for a nucleoside 3',5'-cyclic phosphate.

It is found in the cytoplasm. The protein localises to the cytosol. Its function is as follows. Essential for male fertility. Plays an important role in spermatogenesis and regulates sperm motility by controlling the development of the flagellar bending of sperm. The chain is Cyclic nucleotide-binding domain-containing protein 2 (CNBD2) from Homo sapiens (Human).